Here is a 580-residue protein sequence, read N- to C-terminus: Mucolipin-1 (580 aa).

Residues 1 to 38 form a disordered region; it reads MTAPAGPRGSETERLLTPNPGYGTQAGPSPAPPTPPEE. Over 1–65 the chain is Cytoplasmic; it reads MTAPAGPRGS…FRAKGRKPCK (65 aa). Position 10 is a phosphoserine (S10). The Dileucine motif; mediates targeting to lysosomes signature appears at 11-16; that stretch reads ETERLL. The tract at residues 42–62 is interaction with phosphoinositides; sequence RRRLKYFFMSPCDKFRAKGRK. Residues 66-86 traverse the membrane as a helical segment; sequence LMLQVVKILVVTVQLILFGLS. Residues 87–298 are Extracellular-facing; it reads NQLAVTFREE…VFQHGDNSFR (212 aa). Residues 107–121 are extracellular/lumenal pore loop; it reads LGYSDGADDTFAAYT. C166 and C192 form a disulfide bridge. N-linked (GlcNAc...) asparagine glycosylation occurs at N230. A disulfide bridge connects residues C253 and C284. The chain crosses the membrane as a helical span at residues 299 to 321; sequence LLFDVVVILTCSLSFLLCARSLL. Residues 322–350 lie on the Cytoplasmic side of the membrane; that stretch reads RGFLLQNEFVGFMWRQRGRVISLWERLEF. A helical membrane pass occupies residues 351 to 371; the sequence is VNGWYILLVTSDVLTISGTIM. Residues 372–382 lie on the Extracellular side of the membrane; that stretch reads KIGIEAKNLAS. A helical transmembrane segment spans residues 383–405; that stretch reads YDVCSILLGTSTLLVWVGVIRYL. Topologically, residues 406 to 427 are cytoplasmic; the sequence is TFFHNYNILIATLRVALPSVMR. A helical transmembrane segment spans residues 428–448; the sequence is FCCCVAVIYLGYCFCGWIVLG. At 449 to 456 the chain is on the extracellular side; it reads PYHVKFRS. Positions 457–477 form an intramembrane region, pore-forming; sequence LSMVSECLFSLINGDDMFVTF. Residues 469–474 carry the Selectivity filter motif; sequence NGDDMF. Residues 478–491 lie on the Extracellular side of the membrane; sequence AAMQAQQGRSSLVW. The helical transmembrane segment at 492–513 threads the bilayer; that stretch reads LFSQLYLYSFISLFIYMVLSLF. The Cytoplasmic portion of the chain corresponds to 514–580; the sequence is IALITGAYDT…PSEEHSLLVN (67 aa). A phosphoserine; by PAK mark is found at S557 and S559. A required for palmitoylation and association with membranes region spans residues 565–567; it reads CCC. The Dileucine internalization motif; mediates AP2 complex-dependent internalization motif lies at 573 to 578; that stretch reads EEHSLL.

The protein belongs to the transient receptor (TC 1.A.4) family. Polycystin subfamily. MCOLN1 sub-subfamily. In terms of assembly, homotetramer. Homooligomer. Can heterooligomerize with MCOLN2 or MCOLN3; heteromeric assemblies have different channel properties as compared to the respective homooligomers and may be tissue-specific. Interacts with PDCD6. Interacts with TMEM163. Interacts with LAPTM4B. In terms of processing, palmitoylated; involved in association with membranes. Post-translationally, phosphorylation by PKA inhibits channel activity. Dephosphorylation increases activity. Proteolytically cleaved probably involving multiple lysosomal proteases including cathepsin B; inhibits lysosomal channel activity. In terms of tissue distribution, widely expressed in adult and fetal tissues.

It is found in the late endosome membrane. The protein localises to the lysosome membrane. It localises to the cytoplasmic vesicle membrane. Its subcellular location is the cell projection. The protein resides in the phagocytic cup. It is found in the cytoplasmic vesicle. The protein localises to the phagosome membrane. It localises to the cell membrane. It carries out the reaction Ca(2+)(in) = Ca(2+)(out). The catalysed reaction is Fe(2+)(in) = Fe(2+)(out). The enzyme catalyses Mg(2+)(in) = Mg(2+)(out). It catalyses the reaction K(+)(in) = K(+)(out). It carries out the reaction Na(+)(in) = Na(+)(out). Channel activity is controlled by multiple regulatory mechanisms in different subcellular compartments. Channel function is transiently modulated by changes in Ca(2+) in a pH-dependent manner; pH changes modify the aggregation state of unitary channels; a negative cooperativity between extracellular/lumenal Ca(2+) and H(+) is suggested. Regulated by phosphoinositides in a compartment-specific manner: in lysosomes activated by PtdIns(3,5)P2 (Phosphatidylinositol 3,5-bisphosphate) and at the plasma membrane inhibited by PtdIns(4,5)P2 (Phosphatidylinositol 4,5-bisphosphate). Functionally, nonselective cation channel probably playing a role in the regulation of membrane trafficking events and of metal homeostasis. Acts as a Ca(2+)-permeable cation channel with inwardly rectifying activity. Proposed to play a major role in Ca(2+) release from late endosome and lysosome vesicles to the cytoplasm, which is important for many lysosome-dependent cellular events, including the fusion and trafficking of these organelles, exocytosis and autophagy. Required for efficient uptake of large particles in macrophages in which Ca(2+) release from the lysosomes triggers lysosomal exocytosis. May also play a role in phagosome-lysosome fusion. Involved in lactosylceramide trafficking indicative for a role in the regulation of late endocytic membrane fusion/fission events. By mediating lysosomal Ca(2+) release is involved in regulation of mTORC1 signaling and in mTOR/TFEB-dependent lysosomal adaptation to environmental cues such as nutrient levels. Seems to act as lysosomal active oxygen species (ROS) sensor involved in ROS-induced TFEB activation and autophagy. Also functions as a Fe(2+) permeable channel in late endosomes and lysosomes. Also permeable to Mg(2+), Na(+). K(+) and Cs(+). Proposed to play a role in zinc homeostasis probably implicating its association with TMEM163 In adaptive immunity, TRPML2 and TRPML1 may play redundant roles in the function of the specialized lysosomes of B cells. Its function is as follows. May contribute to cellular lipase activity within the late endosomal pathway or at the cell surface which may be involved in processes of membrane reshaping and vesiculation, especially the growth of tubular structures. However, it is not known, whether it conveys the enzymatic activity directly, or merely facilitates the activity of an associated phospholipase. The polypeptide is Mucolipin-1 (Homo sapiens (Human)).